The following is a 374-amino-acid chain: D-amino-acid oxidase 3 (374 aa).

An N-terminal signal peptide occupies residues 1–19 (MVKYDAIILGSGVLGLSIA). Residues serine 11, leucine 14, lysine 34, aspartate 35, alanine 46, serine 47, and glycine 51 each coordinate FAD. Asparagine 180 is a glycosylation site (N-linked (GlcNAc...) asparagine). Residues cysteine 214 and cysteine 271 are joined by a disulfide bond. Positions 229, 246, and 296 each coordinate (R)-lactate. Anthranilate-binding residues include tyrosine 229, tyrosine 246, and arginine 296. 5 residues coordinate FAD: arginine 296, glycine 342, glycine 345, tyrosine 346, and glutamine 347. The short motif at 372 to 374 (AKL) is the Microbody targeting signal element.

This sequence belongs to the DAMOX/DASOX family. FAD is required as a cofactor.

It is found in the peroxisome matrix. It catalyses the reaction a D-alpha-amino acid + O2 + H2O = a 2-oxocarboxylate + H2O2 + NH4(+). Catalyzes the oxidative deamination of D-amino acids with broad substrate specificity. Enables the organism to utilize D-amino acids as a source of nutrients. Enables the organism to utilize D-asparate and D-glutamate as a nitrogen source and may also contribute to utlization of D-tryptophan, D-tyrosine and D-asparagine as a nitrogen source. Protects the organism from the toxicity of D-amino acids, including from D-glutamate. May play a role in its interaction with the host. This is D-amino-acid oxidase 3 from Cryptococcus deuterogattii (strain R265) (Cryptococcus gattii VGII (strain R265)).